The sequence spans 214 residues: Cytochrome b (214 aa).

The next 4 helical transmembrane spans lie at 31-51, 75-96, 111-131, and 176-196; these read FGSM…FLAI, WIMQ…YTHI, WLSG…GYVL, and FFAL…IHIL. Residues His-81 and His-95 each contribute to the heme b site. The heme b site is built by His-180 and His-194. Residue His-199 coordinates a ubiquinone.

The protein belongs to the cytochrome b family. The cytochrome bc1 complex contains 3 respiratory subunits (MT-CYB, CYC1 and UQCRFS1), 2 core proteins (UQCRC1 and UQCRC2) and probably 6 low-molecular weight proteins. Heme b serves as cofactor.

It localises to the mitochondrion inner membrane. Component of the ubiquinol-cytochrome c reductase complex (complex III or cytochrome b-c1 complex) that is part of the mitochondrial respiratory chain. The b-c1 complex mediates electron transfer from ubiquinol to cytochrome c. Contributes to the generation of a proton gradient across the mitochondrial membrane that is then used for ATP synthesis. This is Cytochrome b (MT-CYB) from Lachesis muta muta (Bushmaster).